The sequence spans 174 residues: 3-hydroxydecanoyl-[acyl-carrier-protein] dehydratase (174 aa).

Histidine 71 is an active-site residue.

Belongs to the thioester dehydratase family. FabA subfamily. As to quaternary structure, homodimer.

The protein resides in the cytoplasm. The catalysed reaction is a (3R)-hydroxyacyl-[ACP] = a (2E)-enoyl-[ACP] + H2O. The enzyme catalyses (3R)-hydroxydecanoyl-[ACP] = (2E)-decenoyl-[ACP] + H2O. It carries out the reaction (2E)-decenoyl-[ACP] = (3Z)-decenoyl-[ACP]. The protein operates within lipid metabolism; fatty acid biosynthesis. Necessary for the introduction of cis unsaturation into fatty acids. Catalyzes the dehydration of (3R)-3-hydroxydecanoyl-ACP to E-(2)-decenoyl-ACP and then its isomerization to Z-(3)-decenoyl-ACP. Can catalyze the dehydratase reaction for beta-hydroxyacyl-ACPs with saturated chain lengths up to 16:0, being most active on intermediate chain length. The protein is 3-hydroxydecanoyl-[acyl-carrier-protein] dehydratase of Nitrobacter winogradskyi (strain ATCC 25391 / DSM 10237 / CIP 104748 / NCIMB 11846 / Nb-255).